The following is a 57-amino-acid chain: Zinc finger protein MJ0458.1 (57 aa).

Short sequence motifs (c(P)XCG motif) lie at residues 8-12 (CISCN), 26-30 (CPNCG), 37-41 (CERCR), and 49-53 (CPKCG). Zn(2+) contacts are provided by Cys26 and Cys29. Residues Cys49 and Cys52 each contribute to the Zn(2+) site.

As to quaternary structure, monomer in solution.

Functionally, zinc-binding protein that binds only one zinc ion. The chain is Zinc finger protein MJ0458.1 from Methanocaldococcus jannaschii (strain ATCC 43067 / DSM 2661 / JAL-1 / JCM 10045 / NBRC 100440) (Methanococcus jannaschii).